Reading from the N-terminus, the 137-residue chain is Peptide methionine sulfoxide reductase MsrB (137 aa).

The MsrB domain maps to 7–129 (AEELKKNLSE…NSASLRFTDG (123 aa)). Zn(2+) contacts are provided by Cys-46, Cys-49, Cys-95, and Cys-98. Cys-118 acts as the Nucleophile in catalysis.

This sequence belongs to the MsrB Met sulfoxide reductase family. It depends on Zn(2+) as a cofactor.

It catalyses the reaction L-methionyl-[protein] + [thioredoxin]-disulfide + H2O = L-methionyl-(R)-S-oxide-[protein] + [thioredoxin]-dithiol. This chain is Peptide methionine sulfoxide reductase MsrB, found in Escherichia coli (strain K12 / MC4100 / BW2952).